The sequence spans 287 residues: Shikimate dehydrogenase (NADP(+)) (287 aa).

Shikimate is bound by residues 20-22 (SRS) and Thr67. The Proton acceptor role is filled by Lys71. NADP(+) is bound at residue Glu84. Shikimate-binding residues include Asn93 and Asp108. Residues 132–136 (GAGGA), 156–161 (NRTAAR), and Met226 each bind NADP(+). Tyr228 is a binding site for shikimate. Position 250 (Gly250) interacts with NADP(+).

The protein belongs to the shikimate dehydrogenase family. Homodimer.

The catalysed reaction is shikimate + NADP(+) = 3-dehydroshikimate + NADPH + H(+). Its pathway is metabolic intermediate biosynthesis; chorismate biosynthesis; chorismate from D-erythrose 4-phosphate and phosphoenolpyruvate: step 4/7. Functionally, involved in the biosynthesis of the chorismate, which leads to the biosynthesis of aromatic amino acids. Catalyzes the reversible NADPH linked reduction of 3-dehydroshikimate (DHSA) to yield shikimate (SA). The sequence is that of Shikimate dehydrogenase (NADP(+)) from Bordetella parapertussis (strain 12822 / ATCC BAA-587 / NCTC 13253).